The following is a 318-amino-acid chain: MTELTAATPTKRPATATDYVNLMKPRIMMLVVFTAVAGLAAASGMTGITMHPAMAAIAVLAVALGSGAAGAINMWYDADIDAIMSRTSTRPIPSGAVPKEEALTMGLIMSGVSVMLMWLASNWLAAALLAFSIFYYGVIYTMWLKRATPQNIVIGGGAGAFPPVIGWAAVTGNTPLDAWILFAIIFFWTPPHFWALSLLAHKEYAKVSVPMLPVTHGAKATRFQILVYTLVLIPVSLAPLATGLGGWIYGAVAGGLGLVFLAYAVAILRSKAGDDGAPAGDMKLARTAFLFSILYLFALFGAVLVEHAAGLHFPVFGA.

Transmembrane regions (helical) follow at residues 27 to 47 (IMML…GMTG), 52 to 72 (PAMA…AGAI), 103 to 123 (LTMG…ASNW), 124 to 144 (LAAA…TMWL), 152 to 172 (IVIG…AVTG), 179 to 199 (WILF…LSLL), 225 to 245 (ILVY…TGLG), 248 to 268 (IYGA…VAIL), and 288 to 308 (AFLF…VEHA).

Belongs to the UbiA prenyltransferase family. Protoheme IX farnesyltransferase subfamily. As to quaternary structure, interacts with CtaA.

It is found in the cell inner membrane. The enzyme catalyses heme b + (2E,6E)-farnesyl diphosphate + H2O = Fe(II)-heme o + diphosphate. It functions in the pathway porphyrin-containing compound metabolism; heme O biosynthesis; heme O from protoheme: step 1/1. Converts heme B (protoheme IX) to heme O by substitution of the vinyl group on carbon 2 of heme B porphyrin ring with a hydroxyethyl farnesyl side group. This Hyphomonas neptunium (strain ATCC 15444) protein is Protoheme IX farnesyltransferase.